A 228-amino-acid polypeptide reads, in one-letter code: MSYVFVNDSSQTNVPLLQACIDGDFTYSKRLLESGFDPNIRDSRGRTGLHLAAARGNVDICQLLHKFGADPLATDYQGNTALHLCGHVDTIQFLVSNGLKIDICNHQGATPLVLAKRRGVNKDVIRLLESLEEQEVKGFNRGAHSKLETMQTAESESAMESHSLLNPNLQQGEGVLSSFRTTWQEFVEDLGFWRVLLLILVIALLSLGIAYYVSGVLPFVDNQPELVH.

ANK repeat units lie at residues 11–40, 44–74, 77–103, and 107–138; these read QTNV…DPNI, RGRT…PLAT, QGNT…KIDI, and QGAT…EVKG. Residues 195 to 215 traverse the membrane as a helical segment; that stretch reads VLLLILVIALLSLGIAYYVSG.

It localises to the membrane. The polypeptide is Ankyrin repeat domain-containing protein 46 (Ankrd46) (Mus musculus (Mouse)).